The sequence spans 295 residues: DegV domain-containing protein MG326 (295 aa).

In terms of domain architecture, DegV spans 4–292 (TAIITDSTAS…IDAFSISLLI (289 aa)). 2 residues coordinate hexadecanoate: T63 and S95.

Its function is as follows. May bind long-chain fatty acids, such as palmitate, and may play a role in lipid transport or fatty acid metabolism. This is DegV domain-containing protein MG326 from Mycoplasma genitalium (strain ATCC 33530 / DSM 19775 / NCTC 10195 / G37) (Mycoplasmoides genitalium).